A 548-amino-acid polypeptide reads, in one-letter code: Chaperonin GroEL (548 aa).

Residues 30 to 33 (TLGP), lysine 51, 87 to 91 (DGTTT), glycine 415, and aspartate 496 contribute to the ATP site. A disordered region spans residues 527-548 (SDKEDAMPPMRGGMGGMGGMDF). Positions 538–548 (GGMGGMGGMDF) are enriched in gly residues.

It belongs to the chaperonin (HSP60) family. As to quaternary structure, forms a cylinder of 14 subunits composed of two heptameric rings stacked back-to-back. Interacts with the co-chaperonin GroES.

It is found in the cytoplasm. The enzyme catalyses ATP + H2O + a folded polypeptide = ADP + phosphate + an unfolded polypeptide.. In terms of biological role, together with its co-chaperonin GroES, plays an essential role in assisting protein folding. The GroEL-GroES system forms a nano-cage that allows encapsulation of the non-native substrate proteins and provides a physical environment optimized to promote and accelerate protein folding. In Rickettsia akari (strain Hartford), this protein is Chaperonin GroEL.